A 549-amino-acid polypeptide reads, in one-letter code: Glucose-6-phosphate isomerase (549 aa).

The Proton donor role is filled by Glu355. Catalysis depends on residues His386 and Lys514.

This sequence belongs to the GPI family.

The protein resides in the cytoplasm. It catalyses the reaction alpha-D-glucose 6-phosphate = beta-D-fructose 6-phosphate. It participates in carbohydrate biosynthesis; gluconeogenesis. Its pathway is carbohydrate degradation; glycolysis; D-glyceraldehyde 3-phosphate and glycerone phosphate from D-glucose: step 2/4. Functionally, catalyzes the reversible isomerization of glucose-6-phosphate to fructose-6-phosphate. This Edwardsiella ictaluri (strain 93-146) protein is Glucose-6-phosphate isomerase.